The primary structure comprises 105 residues: Pyrimidine/purine nucleoside phosphorylase (105 aa).

Belongs to the nucleoside phosphorylase PpnP family.

The enzyme catalyses a purine D-ribonucleoside + phosphate = a purine nucleobase + alpha-D-ribose 1-phosphate. It catalyses the reaction adenosine + phosphate = alpha-D-ribose 1-phosphate + adenine. It carries out the reaction cytidine + phosphate = cytosine + alpha-D-ribose 1-phosphate. The catalysed reaction is guanosine + phosphate = alpha-D-ribose 1-phosphate + guanine. The enzyme catalyses inosine + phosphate = alpha-D-ribose 1-phosphate + hypoxanthine. It catalyses the reaction thymidine + phosphate = 2-deoxy-alpha-D-ribose 1-phosphate + thymine. It carries out the reaction uridine + phosphate = alpha-D-ribose 1-phosphate + uracil. The catalysed reaction is xanthosine + phosphate = alpha-D-ribose 1-phosphate + xanthine. Catalyzes the phosphorolysis of diverse nucleosides, yielding D-ribose 1-phosphate and the respective free bases. Can use uridine, adenosine, guanosine, cytidine, thymidine, inosine and xanthosine as substrates. Also catalyzes the reverse reactions. The protein is Pyrimidine/purine nucleoside phosphorylase of Anaeromyxobacter sp. (strain Fw109-5).